We begin with the raw amino-acid sequence, 177 residues long: uncharacterized protein (177 aa).

To M.jannaschii MJ0628.

This is an uncharacterized protein from Methanocaldococcus jannaschii (strain ATCC 43067 / DSM 2661 / JAL-1 / JCM 10045 / NBRC 100440) (Methanococcus jannaschii).